Consider the following 318-residue polypeptide: Biotin synthase (318 aa).

The Radical SAM core domain maps to 44 to 273; that stretch reads LCGNKFDLCT…TVQIRLAGGR (230 aa). Positions 62, 66, and 69 each coordinate [4Fe-4S] cluster. The [2Fe-2S] cluster site is built by serine 106, cysteine 138, cysteine 198, and arginine 268.

Belongs to the radical SAM superfamily. Biotin synthase family. Homodimer. The cofactor is [4Fe-4S] cluster. [2Fe-2S] cluster serves as cofactor.

It carries out the reaction (4R,5S)-dethiobiotin + (sulfur carrier)-SH + 2 reduced [2Fe-2S]-[ferredoxin] + 2 S-adenosyl-L-methionine = (sulfur carrier)-H + biotin + 2 5'-deoxyadenosine + 2 L-methionine + 2 oxidized [2Fe-2S]-[ferredoxin]. The protein operates within cofactor biosynthesis; biotin biosynthesis; biotin from 7,8-diaminononanoate: step 2/2. Its function is as follows. Catalyzes the conversion of dethiobiotin (DTB) to biotin by the insertion of a sulfur atom into dethiobiotin via a radical-based mechanism. This chain is Biotin synthase, found in Clostridium botulinum (strain Langeland / NCTC 10281 / Type F).